We begin with the raw amino-acid sequence, 329 residues long: MASQLTDAFARKFYYLRLSITDVCNFRCTYCLPDGYKPSGVTNKGFLTVDEIRRVTRAFASLGTEKVRLTGGEPSLRRDFTDIIAAVRENDAIRQIAVTTNGYRLERDVANWRDAGLTGINVSVDSLDARQFHAITGQDKFNQVMAGIDAAFEAGFEKVKVNTVLMRDVNHHQLDTFLNWIQHRPIQLRFIELMETGEGSELFRKHHISGQVLRDELLRRGWIHQLRQRSDGPAQVFCHPDYAGEIGLIMPYEKDFCTTCNRLRVSSIGKLHLCLFGEGGVNLRDLLEDDIQQQALEARISAALREKKQTHFLHQNNTGITQNLSYIGG.

Positions 8–234 constitute a Radical SAM core domain; sequence AFARKFYYLR…QLRQRSDGPA (227 aa). Position 17 (Arg17) interacts with GTP. Cys24 and Cys28 together coordinate [4Fe-4S] cluster. Residue Tyr30 coordinates S-adenosyl-L-methionine. Cys31 lines the [4Fe-4S] cluster pocket. Arg68 provides a ligand contact to GTP. Residue Gly72 coordinates S-adenosyl-L-methionine. Thr99 contacts GTP. Residue Ser123 coordinates S-adenosyl-L-methionine. Residue Lys160 participates in GTP binding. Met194 is a binding site for S-adenosyl-L-methionine. [4Fe-4S] cluster is bound by residues Cys257 and Cys260. 262-264 provides a ligand contact to GTP; the sequence is RLR. Position 274 (Cys274) interacts with [4Fe-4S] cluster.

This sequence belongs to the radical SAM superfamily. MoaA family. Monomer and homodimer. [4Fe-4S] cluster serves as cofactor.

It catalyses the reaction GTP + AH2 + S-adenosyl-L-methionine = (8S)-3',8-cyclo-7,8-dihydroguanosine 5'-triphosphate + 5'-deoxyadenosine + L-methionine + A + H(+). It functions in the pathway cofactor biosynthesis; molybdopterin biosynthesis. In terms of biological role, catalyzes the cyclization of GTP to (8S)-3',8-cyclo-7,8-dihydroguanosine 5'-triphosphate. This is GTP 3',8-cyclase from Escherichia coli O127:H6 (strain E2348/69 / EPEC).